The sequence spans 141 residues: Putative antiporter subunit mnhB2 (141 aa).

A run of 4 helical transmembrane segments spans residues 10-30 (TVTK…FFAG), 35-55 (GGGF…FLAF), 70-90 (KLMI…VFFG), and 116-136 (LFEL…MLAL).

The protein belongs to the CPA3 antiporters (TC 2.A.63) subunit B family. In terms of assembly, may form a heterooligomeric complex that consists of seven subunits: mnhA2, mnhB2, mnhC2, mnhD2, mnhE2, mnhF2 and mnhG2.

Its subcellular location is the cell membrane. The chain is Putative antiporter subunit mnhB2 (mnhB2) from Staphylococcus haemolyticus (strain JCSC1435).